A 466-amino-acid chain; its full sequence is Cysteine--tRNA ligase (466 aa).

Cys-28 provides a ligand contact to Zn(2+). The 'HIGH' region signature appears at Pro-30 to Asn-40. Zn(2+)-binding residues include Cys-208, His-233, and Glu-237. The 'KMSKS' region signature appears at Lys-265–Ser-269. Lys-268 contributes to the ATP binding site.

It belongs to the class-I aminoacyl-tRNA synthetase family. Monomer. Zn(2+) is required as a cofactor.

The protein resides in the cytoplasm. It carries out the reaction tRNA(Cys) + L-cysteine + ATP = L-cysteinyl-tRNA(Cys) + AMP + diphosphate. This chain is Cysteine--tRNA ligase, found in Staphylococcus aureus (strain Mu3 / ATCC 700698).